Here is a 101-residue protein sequence, read N- to C-terminus: Small ribosomal subunit protein uS14 (101 aa).

This sequence belongs to the universal ribosomal protein uS14 family. Part of the 30S ribosomal subunit. Contacts proteins S3 and S10.

Its function is as follows. Binds 16S rRNA, required for the assembly of 30S particles and may also be responsible for determining the conformation of the 16S rRNA at the A site. The protein is Small ribosomal subunit protein uS14 of Rhizobium johnstonii (strain DSM 114642 / LMG 32736 / 3841) (Rhizobium leguminosarum bv. viciae).